A 91-amino-acid polypeptide reads, in one-letter code: Small ribosomal subunit protein bS18 (91 aa).

Belongs to the bacterial ribosomal protein bS18 family. In terms of assembly, part of the 30S ribosomal subunit. Forms a tight heterodimer with protein bS6.

Functionally, binds as a heterodimer with protein bS6 to the central domain of the 16S rRNA, where it helps stabilize the platform of the 30S subunit. In Burkholderia ambifaria (strain MC40-6), this protein is Small ribosomal subunit protein bS18.